Here is a 120-residue protein sequence, read N- to C-terminus: MSLKIRLARGGAKKRPFYRIVVADARAPRDGRFIERIGTFDPLKAKNAPDRIVLDAEKAKDWLAKGAQPTDRVARLLDGLEIIKRESRNNPQQGQPKKKAQERAAAAAAAAEKAASEAAA.

The interval 84–120 (KRESRNNPQQGQPKKKAQERAAAAAAAAEKAASEAAA) is disordered. Low complexity predominate over residues 103 to 120 (RAAAAAAAAEKAASEAAA).

The protein belongs to the bacterial ribosomal protein bS16 family.

The polypeptide is Small ribosomal subunit protein bS16 (Beijerinckia indica subsp. indica (strain ATCC 9039 / DSM 1715 / NCIMB 8712)).